Reading from the N-terminus, the 1249-residue chain is Clustered mitochondria protein homolog (1249 aa).

A disordered region spans residues 1–32 (MAQTNGELEHSKETPEQLTNGNHPEETQEEDN). A Clu domain is found at 318 to 562 (DITRSQENYL…RVTPLDVMWQ (245 aa)). A compositionally biased stretch (basic and acidic residues) spans 605–628 (KAEADAAKAESSEATESKEQASEE). Disordered stretches follow at residues 605 to 636 (KAEA…DQER) and 868 to 903 (KAPA…AAKE). 3 TPR repeats span residues 974 to 1007 (AKLY…TERT), 1016 to 1049 (ILSY…WKII), and 1058 to 1091 (ITTM…CESL). Residues 1174-1249 (NMNPRSLGTK…KLRGSKKSSA (76 aa)) form a disordered region. Residues 1176–1190 (NPRSLGTKIQPQVGQ) are compositionally biased toward polar residues.

Belongs to the CLU family. In terms of assembly, may associate with the eukaryotic translation initiation factor 3 (eIF-3) complex.

The protein resides in the cytoplasm. MRNA-binding protein involved in proper cytoplasmic distribution of mitochondria. The sequence is that of Clustered mitochondria protein homolog from Aspergillus niger (strain ATCC MYA-4892 / CBS 513.88 / FGSC A1513).